We begin with the raw amino-acid sequence, 172 residues long: Protein-export protein SecB (172 aa).

It belongs to the SecB family. Homotetramer, a dimer of dimers. One homotetramer interacts with 1 SecA dimer.

The protein localises to the cytoplasm. One of the proteins required for the normal export of preproteins out of the cell cytoplasm. It is a molecular chaperone that binds to a subset of precursor proteins, maintaining them in a translocation-competent state. It also specifically binds to its receptor SecA. The polypeptide is Protein-export protein SecB (Xylella fastidiosa (strain Temecula1 / ATCC 700964)).